Here is a 295-residue protein sequence, read N- to C-terminus: Light-independent protochlorophyllide reductase iron-sulfur ATP-binding protein (295 aa).

ATP is bound by residues 39-44 (GIGKST) and Lys68. A Mg(2+)-binding site is contributed by Ser43. Residues Cys124 and Cys158 each coordinate [4Fe-4S] cluster. Position 209-210 (209-210 (NR)) interacts with ATP.

It belongs to the NifH/BchL/ChlL family. Homodimer. Protochlorophyllide reductase is composed of three subunits; ChlL, ChlN and ChlB. [4Fe-4S] cluster is required as a cofactor.

The enzyme catalyses chlorophyllide a + oxidized 2[4Fe-4S]-[ferredoxin] + 2 ADP + 2 phosphate = protochlorophyllide a + reduced 2[4Fe-4S]-[ferredoxin] + 2 ATP + 2 H2O. The protein operates within porphyrin-containing compound metabolism; chlorophyll biosynthesis (light-independent). Its function is as follows. Component of the dark-operative protochlorophyllide reductase (DPOR) that uses Mg-ATP and reduced ferredoxin to reduce ring D of protochlorophyllide (Pchlide) to form chlorophyllide a (Chlide). This reaction is light-independent. The L component serves as a unique electron donor to the NB-component of the complex, and binds Mg-ATP. This is Light-independent protochlorophyllide reductase iron-sulfur ATP-binding protein from Prochlorococcus marinus (strain MIT 9515).